A 755-amino-acid chain; its full sequence is Subtilisin-like protease 4 (755 aa).

The first 20 residues, 1–20 (MDYFLFIALTFLLTFHVHNA), serve as a signal peptide directing secretion. Residues 41-119 (YIIHVTGPEG…ISAHPQRVLH (79 aa)) enclose the Inhibitor I9 domain. One can recognise a Peptidase S8 domain in the interval 128–611 (FLGLQQDTGV…SGHVNPSRAN (484 aa)). Asp-153 (charge relay system) is an active-site residue. Asn-182 is a glycosylation site (N-linked (GlcNAc...) asparagine). His-217 functions as the Charge relay system in the catalytic mechanism. N-linked (GlcNAc...) asparagine glycans are attached at residues Asn-297, Asn-325, Asn-393, Asn-468, and Asn-529. The 86-residue stretch at 376–461 (PLAYAGKNGK…ATHVSYAAGI (86 aa)) folds into the PA domain. Residue Ser-544 is the Charge relay system of the active site. Asn-706 and Asn-727 each carry an N-linked (GlcNAc...) asparagine glycan.

Belongs to the peptidase S8 family.

The protein localises to the secreted. It localises to the extracellular space. Its subcellular location is the apoplast. Required for arbuscular mycorrhiza (AM) development during AM symbiosis with AM fungi (e.g. Glomeromycota intraradices). This chain is Subtilisin-like protease 4, found in Lotus japonicus (Lotus corniculatus var. japonicus).